The following is a 328-amino-acid chain: MQYKNLGKSGLKVSTLSFGAWVTFGNQLDVKEAKSILQCCRDHGVNFFDNAEVYANGRAEEIMGQAIRELGWRRSDIVISTKIFWGGPGPNDKGLSRKHIVEGTKASLKRLDMDYVDVLYCHRPDASTPIEETVRAMNYVIDKGWAFYWGTSEWSAQQITEAWGAADRLDLVGPIVEQPEYNMFARHKVETEFLPLYTNHGIGLTTWSPLASGVLTGKYNKGAIPSDSRFALENYKNLANRSLVDDVLRKVSGLKPIADELGVTLAQLAIAWCASNPNVSSVITGATRESQIQENMKAVDVIPLLTPIVLDKIEQVIQSKPKRPESYR.

NADP(+)-binding residues include Trp-21, Gln-27, and Asp-49. Catalysis depends on Tyr-54, which acts as the Proton donor/acceptor. NADP(+) contacts are provided by Ser-152, Gln-178, Trp-207, Ser-208, Pro-209, Leu-210, Ala-211, Lys-218, Arg-229, Gly-285, Thr-287, Gln-291, Glu-294, and Asn-295.

This sequence belongs to the shaker potassium channel beta subunit family. In terms of assembly, forms heteromultimeric complexes with potassium channel alpha subunits. In terms of tissue distribution, expressed in roots, leaves and flowers (at protein level).

Its function is as follows. Probable accessory potassium channel protein which modulates the activity of the pore-forming alpha subunit. In Arabidopsis thaliana (Mouse-ear cress), this protein is Probable voltage-gated potassium channel subunit beta (KAB1).